A 635-amino-acid polypeptide reads, in one-letter code: MSGARSTTAGAVPSAATTSTTSTTSNSKDSDSNESLYPLALLMDELKHDDIANRVEAMKKLDTIALALGPERTRNELIPFLTEVAQDDEDEVFAVLAEQLGKFVPYIGGPQYATILLPVLEILASAEETLVREKAVDSLNNVAQELSQEQLFSDFVPLIEHLATADWFSSKVSACGLFKSVIVRIKDDSLRKNILALYLQLAQDDTPMVKRAVGKNLPILIDLLTQNLGLSTDEDWDYISNIFQKIINDNQDSVKFLAVDCLISILKFFNAKGDESHTQDLLNSAVKLIGDEAWRVRYMAADRFSDLASQFSSNQAYIDELVQPFLNLCEDNEGDVREAVAKQVSGFAKFLNDPSIILNKILPAVQNLSMDESETVRSALASKITNIVLLLNKDQVINNFLPILLNMLRDEFPDVRLNIIASLKVVNDVIGIELLSDSLLPAITELAKDVNWRVRMAIIEYIPILAEQLGMQFFDQQLSDLCLSWLWDTVYSIREAAVNNLKRLTEIFGSDWCRDEIISRLLKFDLQLLENFVSRFTILSALTTLVPVVSLDVVTEQLLPFISHLADDGVPNIRFNVAKSYAVIVKVLIKDEAKYDALIKNTILPSLQTLCQDEDVDVKYFAKKSLAECQELLKN.

The segment covering 1–27 (MSGARSTTAGAVPSAATTSTTSTTSNS) has biased composition (low complexity). The disordered stretch occupies residues 1 to 33 (MSGARSTTAGAVPSAATTSTTSTTSNSKDSDSN). 15 HEAT repeats span residues 34 to 72 (ESLY…GPER), 73 to 111 (TRNE…GGPQ), 112 to 150 (YATI…SQEQ), 151 to 189 (LFSD…KDDS), 190 to 228 (LRKN…TQNL), 229 to 273 (GLST…NAKG), 274 to 316 (DESH…SNQA), 317 to 356 (YIDE…DPSI), 357 to 395 (ILNK…NKDQ), 396 to 434 (VINN…GIEL), 435 to 473 (LSDS…GMQF), 474 to 512 (FDQQ…GSDW), 513 to 553 (CRDE…SLDV), 554 to 598 (VTEQ…YDAL), and 599 to 632 (IKNT…CQEL).

This sequence belongs to the phosphatase 2A regulatory subunit A family. As to quaternary structure, PP2A exists in several trimeric forms, all of which consist of a core composed of a catalytic subunit associated with a 65 kDa regulatory subunit (PR65) (subunit A). The core complex associates with a third, variable subunit (subunit B), which confers distinct properties to the holoenzyme.

Its function is as follows. Phosphatase 2A affects a variety of biological processes in the cell such as transcription, cell cycle progression and cellular morphogenesis, and provides an initial identification of critical substrates for this phosphatase. The regulatory subunit may direct the catalytic subunit to distinct, albeit overlapping, subsets of substrates. This chain is Protein phosphatase PP2A regulatory subunit A (TPD3), found in Saccharomyces cerevisiae (strain ATCC 204508 / S288c) (Baker's yeast).